A 303-amino-acid chain; its full sequence is Diaminopimelate epimerase (303 aa).

Asn-14 is a binding site for substrate. The segment covering 60 to 74 (PVSSAGATADAAAGR) has biased composition (low complexity). Residues 60-86 (PVSSAGATADAAAGRPPQPSAGRPPQP) are disordered. The span at 75 to 86 (PPQPSAGRPPQP) shows a compositional bias: pro residues. Asn-97 provides a ligand contact to substrate. Cys-106 (proton donor) is an active-site residue. Residues 107–108 (GN), Asn-178, Asn-209, and 227–228 (ER) each bind substrate. Catalysis depends on Cys-236, which acts as the Proton acceptor. 237-238 (GS) is a substrate binding site.

This sequence belongs to the diaminopimelate epimerase family. Homodimer.

It localises to the cytoplasm. It carries out the reaction (2S,6S)-2,6-diaminopimelate = meso-2,6-diaminopimelate. It functions in the pathway amino-acid biosynthesis; L-lysine biosynthesis via DAP pathway; DL-2,6-diaminopimelate from LL-2,6-diaminopimelate: step 1/1. Functionally, catalyzes the stereoinversion of LL-2,6-diaminopimelate (L,L-DAP) to meso-diaminopimelate (meso-DAP), a precursor of L-lysine and an essential component of the bacterial peptidoglycan. This chain is Diaminopimelate epimerase, found in Acidothermus cellulolyticus (strain ATCC 43068 / DSM 8971 / 11B).